A 402-amino-acid chain; its full sequence is Succinyl-diaminopimelate desuccinylase (402 aa).

Residue histidine 88 participates in Zn(2+) binding. Aspartate 90 is a catalytic residue. Aspartate 121 is a binding site for Zn(2+). Glutamate 155 acts as the Proton acceptor in catalysis. Glutamate 156, glutamate 184, and histidine 374 together coordinate Zn(2+).

The protein belongs to the peptidase M20A family. DapE subfamily. As to quaternary structure, homodimer. Zn(2+) is required as a cofactor. It depends on Co(2+) as a cofactor.

The enzyme catalyses N-succinyl-(2S,6S)-2,6-diaminopimelate + H2O = (2S,6S)-2,6-diaminopimelate + succinate. It functions in the pathway amino-acid biosynthesis; L-lysine biosynthesis via DAP pathway; LL-2,6-diaminopimelate from (S)-tetrahydrodipicolinate (succinylase route): step 3/3. Its function is as follows. Catalyzes the hydrolysis of N-succinyl-L,L-diaminopimelic acid (SDAP), forming succinate and LL-2,6-diaminopimelate (DAP), an intermediate involved in the bacterial biosynthesis of lysine and meso-diaminopimelic acid, an essential component of bacterial cell walls. This is Succinyl-diaminopimelate desuccinylase from Psychrobacter sp. (strain PRwf-1).